Here is a 247-residue protein sequence, read N- to C-terminus: UPF0246 protein LCABL_22600 (247 aa).

The protein belongs to the UPF0246 family.

This Lacticaseibacillus casei (strain BL23) (Lactobacillus casei) protein is UPF0246 protein LCABL_22600.